The following is a 449-amino-acid chain: NADP-specific glutamate dehydrogenase (449 aa).

The active site involves lysine 125.

Belongs to the Glu/Leu/Phe/Val dehydrogenases family. In terms of assembly, homohexamer.

The enzyme catalyses L-glutamate + NADP(+) + H2O = 2-oxoglutarate + NH4(+) + NADPH + H(+). The sequence is that of NADP-specific glutamate dehydrogenase from Giardia intestinalis (Giardia lamblia).